A 265-amino-acid polypeptide reads, in one-letter code: Undecaprenyl-diphosphatase (265 aa).

The next 8 helical transmembrane spans lie at 19-39, 42-62, 80-100, 108-128, 143-163, 181-201, 220-240, and 243-263; these read FLPV…GFTG, ADSF…CLYW, IRGL…GLVA, LFNP…IFLV, MTPG…WPGF, SLAA…ATLY, IGFV…IVLV, and ITLR…FFFW.

It belongs to the UppP family.

It localises to the cell inner membrane. The enzyme catalyses di-trans,octa-cis-undecaprenyl diphosphate + H2O = di-trans,octa-cis-undecaprenyl phosphate + phosphate + H(+). In terms of biological role, catalyzes the dephosphorylation of undecaprenyl diphosphate (UPP). Confers resistance to bacitracin. The chain is Undecaprenyl-diphosphatase from Solidesulfovibrio magneticus (strain ATCC 700980 / DSM 13731 / RS-1) (Desulfovibrio magneticus).